The primary structure comprises 446 residues: Phosphoglucosamine mutase (446 aa).

Ser101 functions as the Phosphoserine intermediate in the catalytic mechanism. Mg(2+)-binding residues include Ser101, Asp240, Asp242, and Asp244. Phosphoserine is present on Ser101.

This sequence belongs to the phosphohexose mutase family. The cofactor is Mg(2+). In terms of processing, activated by phosphorylation.

The catalysed reaction is alpha-D-glucosamine 1-phosphate = D-glucosamine 6-phosphate. In terms of biological role, catalyzes the conversion of glucosamine-6-phosphate to glucosamine-1-phosphate. This is Phosphoglucosamine mutase from Pseudomonas putida (strain W619).